A 190-amino-acid polypeptide reads, in one-letter code: ATP synthase subunit b 1 (190 aa).

Residues 35-55 (DFVVLLGFLLFLAILFYFGVP) traverse the membrane as a helical segment.

It belongs to the ATPase B chain family. F-type ATPases have 2 components, F(1) - the catalytic core - and F(0) - the membrane proton channel. F(1) has five subunits: alpha(3), beta(3), gamma(1), delta(1), epsilon(1). F(0) has three main subunits: a(1), b(2) and c(10-14). The alpha and beta chains form an alternating ring which encloses part of the gamma chain. F(1) is attached to F(0) by a central stalk formed by the gamma and epsilon chains, while a peripheral stalk is formed by the delta and b chains.

The protein localises to the cell inner membrane. Functionally, f(1)F(0) ATP synthase produces ATP from ADP in the presence of a proton or sodium gradient. F-type ATPases consist of two structural domains, F(1) containing the extramembraneous catalytic core and F(0) containing the membrane proton channel, linked together by a central stalk and a peripheral stalk. During catalysis, ATP synthesis in the catalytic domain of F(1) is coupled via a rotary mechanism of the central stalk subunits to proton translocation. Its function is as follows. Component of the F(0) channel, it forms part of the peripheral stalk, linking F(1) to F(0). This is ATP synthase subunit b 1 from Jannaschia sp. (strain CCS1).